The sequence spans 55 residues: Large ribosomal subunit protein bL33 (55 aa).

Over residues 1 to 11 (MAKGGREKIKL) the composition is skewed to basic and acidic residues. A disordered region spans residues 1–29 (MAKGGREKIKLESTAGTGHFYTTTKNKKT). A compositionally biased stretch (polar residues) spans 14–24 (TAGTGHFYTTT).

This sequence belongs to the bacterial ribosomal protein bL33 family.

This chain is Large ribosomal subunit protein bL33, found in Thiobacillus denitrificans (strain ATCC 25259 / T1).